A 382-amino-acid polypeptide reads, in one-letter code: Dual-specificity RNA methyltransferase RlmN (382 aa).

E96 (proton acceptor) is an active-site residue. Positions 102–342 (QGGRGTLCVS…VRTTRGEDID (241 aa)) constitute a Radical SAM core domain. A disulfide bridge connects residues C109 and C345. [4Fe-4S] cluster-binding residues include C116, C120, and C123. S-adenosyl-L-methionine contacts are provided by residues 170–171 (GE), S202, 224–226 (SLH), and N302. The S-methylcysteine intermediate role is filled by C345.

It belongs to the radical SAM superfamily. RlmN family. [4Fe-4S] cluster serves as cofactor.

The protein localises to the cytoplasm. The enzyme catalyses adenosine(2503) in 23S rRNA + 2 reduced [2Fe-2S]-[ferredoxin] + 2 S-adenosyl-L-methionine = 2-methyladenosine(2503) in 23S rRNA + 5'-deoxyadenosine + L-methionine + 2 oxidized [2Fe-2S]-[ferredoxin] + S-adenosyl-L-homocysteine. The catalysed reaction is adenosine(37) in tRNA + 2 reduced [2Fe-2S]-[ferredoxin] + 2 S-adenosyl-L-methionine = 2-methyladenosine(37) in tRNA + 5'-deoxyadenosine + L-methionine + 2 oxidized [2Fe-2S]-[ferredoxin] + S-adenosyl-L-homocysteine. Specifically methylates position 2 of adenine 2503 in 23S rRNA and position 2 of adenine 37 in tRNAs. m2A2503 modification seems to play a crucial role in the proofreading step occurring at the peptidyl transferase center and thus would serve to optimize ribosomal fidelity. This Stutzerimonas stutzeri (strain A1501) (Pseudomonas stutzeri) protein is Dual-specificity RNA methyltransferase RlmN.